The primary structure comprises 599 residues: Pentatricopeptide repeat-containing protein At3g62470, mitochondrial (599 aa).

The N-terminal 99 residues, 1–99 (MAAAPWLHLS…RGFSSGSSNV (99 aa)), are a transit peptide targeting the mitochondrion. 10 PPR repeats span residues 194 to 228 (DSRTYNSMMSILAKTRQFETMVSVLEEMGTKGLLT), 230 to 262 (ETFTIAMKAFAAAKERKKAVGIFELMKKYKFKI), 263 to 293 (GVETINCLLDSLGRAKLGKEAQVLFDKLKER), 297 to 331 (NMMTYTVLLNGWCRVRNLIEAARIWNDMIDQGLKP), 332 to 366 (DIVAHNVMLEGLLRSRKKSDAIKLFHVMKSKGPCP), 367 to 401 (NVRSYTIMIRDFCKQSSMETAIEYFDDMVDSGLQP), 402 to 436 (DAAVYTCLITGFGTQKKLDTVYELLKEMQEKGHPP), 437 to 471 (DGKTYNALIKLMANQKMPEHATRIYNKMIQNEIEP), 472 to 506 (SIHTFNMIMKSYFMARNYEMGRAVWEEMIKKGICP), and 507 to 541 (DDNSYTVLIRGLIGEGKSREACRYLEEMLDKGMKT).

The protein belongs to the PPR family. P subfamily.

The protein resides in the mitochondrion. The sequence is that of Pentatricopeptide repeat-containing protein At3g62470, mitochondrial from Arabidopsis thaliana (Mouse-ear cress).